The primary structure comprises 478 residues: Zinc metalloproteinase/disintegrin VMP-II (478 aa).

The first 20 residues, 1–20, serve as a signal peptide directing secretion; sequence MIQVLLVTICLAVFPYQGSS. The propeptide occupies 21–190; the sequence is IILESGNVND…KASQLNLTPE (170 aa). The 197-residue stretch at 197 to 393 folds into the Peptidase M12B domain; that stretch reads RYIELVIVAD…HNPQCMLNEP (197 aa). Residues Glu200 and Asp284 each coordinate Ca(2+). Cystine bridges form between Cys308/Cys388, Cys348/Cys372, and Cys350/Cys355. Residue His333 coordinates Zn(2+). The active site involves Glu334. Residues His337 and His343 each contribute to the Zn(2+) site. Ca(2+) is bound by residues Cys388 and Asn391. Residues 394 to 405 constitute a propeptide that is removed on maturation; sequence LGTDTVSRNELL. A Disintegrin domain is found at 414–478; that stretch reads GSPANPCCDA…ADCPRNRFHA (65 aa). Disulfide bonds link Cys420/Cys443, Cys434/Cys440, Cys439/Cys464, and Cys452/Cys471. Positions 456 to 458 match the Cell attachment site motif; that stretch reads RGD.

It belongs to the venom metalloproteinase (M12B) family. P-II subfamily. P-IIe sub-subfamily. Heterodimer; disulfide-linked (disintegrin). The cofactor is Zn(2+). As to expression, expressed by the venom gland.

The protein resides in the secreted. Impairs hemostasis in the envenomed animal. Functionally, this recombinant protein inhibits ADP-induced platelet aggregation in whole human blood and this effect is concentration-dependent with an IC(50) of 34 nM. The polypeptide is Zinc metalloproteinase/disintegrin VMP-II (Crotalus viridis viridis (Prairie rattlesnake)).